Here is a 105-residue protein sequence, read N- to C-terminus: uncharacterized protein (105 aa).

At serine 2 the chain carries N-acetylserine.

This is an uncharacterized protein from Saccharomyces cerevisiae (strain ATCC 204508 / S288c) (Baker's yeast).